The primary structure comprises 660 residues: Bifunctional polymyxin resistance protein ArnA (660 aa).

A formyltransferase ArnAFT region spans residues 1-304; it reads MKTVVFAYHD…TLGLVQGSRL (304 aa). (6R)-10-formyltetrahydrofolate is bound at residue 86–88; the sequence is HLI. The active-site Proton donor; for formyltransferase activity is His104. (6R)-10-formyltetrahydrofolate contacts are provided by residues Arg114 and 136 to 140; that span reads VKRAD. Residues 314–660 form a dehydrogenase ArnADH region; sequence RRTRVLILGV…RTVDLTDKPS (347 aa). NAD(+)-binding positions include Asp347 and 368 to 369; that span reads DI. Residues Ala393, Tyr398, and 432–433 each bind UDP-alpha-D-glucuronate; that span reads TS. Glu434 serves as the catalytic Proton acceptor; for decarboxylase activity. Residues Arg460, Asn492, 526–535, and Tyr613 contribute to the UDP-alpha-D-glucuronate site; that span reads KLIDGGKQKR. Catalysis depends on Arg619, which acts as the Proton donor; for decarboxylase activity.

In the N-terminal section; belongs to the Fmt family. UDP-L-Ara4N formyltransferase subfamily. It in the C-terminal section; belongs to the NAD(P)-dependent epimerase/dehydratase family. UDP-glucuronic acid decarboxylase subfamily. As to quaternary structure, homohexamer, formed by a dimer of trimers.

It carries out the reaction UDP-alpha-D-glucuronate + NAD(+) = UDP-beta-L-threo-pentopyranos-4-ulose + CO2 + NADH. The enzyme catalyses UDP-4-amino-4-deoxy-beta-L-arabinose + (6R)-10-formyltetrahydrofolate = UDP-4-deoxy-4-formamido-beta-L-arabinose + (6S)-5,6,7,8-tetrahydrofolate + H(+). Its pathway is nucleotide-sugar biosynthesis; UDP-4-deoxy-4-formamido-beta-L-arabinose biosynthesis; UDP-4-deoxy-4-formamido-beta-L-arabinose from UDP-alpha-D-glucuronate: step 1/3. It participates in nucleotide-sugar biosynthesis; UDP-4-deoxy-4-formamido-beta-L-arabinose biosynthesis; UDP-4-deoxy-4-formamido-beta-L-arabinose from UDP-alpha-D-glucuronate: step 3/3. The protein operates within bacterial outer membrane biogenesis; lipopolysaccharide biosynthesis. In terms of biological role, bifunctional enzyme that catalyzes the oxidative decarboxylation of UDP-glucuronic acid (UDP-GlcUA) to UDP-4-keto-arabinose (UDP-Ara4O) and the addition of a formyl group to UDP-4-amino-4-deoxy-L-arabinose (UDP-L-Ara4N) to form UDP-L-4-formamido-arabinose (UDP-L-Ara4FN). The modified arabinose is attached to lipid A and is required for resistance to polymyxin and cationic antimicrobial peptides. The polypeptide is Bifunctional polymyxin resistance protein ArnA (Escherichia coli O81 (strain ED1a)).